A 146-amino-acid polypeptide reads, in one-letter code: Hemoglobin subunit beta (146 aa).

Valine 1 is modified (N-acetylvaline). The 145-residue stretch at 2–146 (HLSGEEKACV…VANALAHKYH (145 aa)) folds into the Globin domain. At threonine 12 the chain carries Phosphothreonine. Serine 44 is subject to Phosphoserine. At lysine 59 the chain carries N6-acetyllysine. Histidine 63 is a heme b binding site. At lysine 82 the chain carries N6-acetyllysine. Histidine 92 is a heme b binding site. Position 93 is an S-nitrosocysteine (cysteine 93). Residue lysine 144 is modified to N6-acetyllysine.

It belongs to the globin family. As to quaternary structure, heterotetramer of two alpha chains and two beta chains. As to expression, red blood cells.

Its function is as follows. Involved in oxygen transport from the lung to the various peripheral tissues. The sequence is that of Hemoglobin subunit beta (HBB) from Suncus murinus (Asian house shrew).